The following is a 303-amino-acid chain: Diaminopimelate epimerase (303 aa).

Substrate-binding residues include N15 and N72. C81 (proton donor) is an active-site residue. Substrate is bound by residues 82 to 83, N169, N202, and 220 to 221; these read GN and ER. The active-site Proton acceptor is the C229. 230–231 lines the substrate pocket; the sequence is GT.

Belongs to the diaminopimelate epimerase family. Homodimer.

The protein resides in the cytoplasm. It catalyses the reaction (2S,6S)-2,6-diaminopimelate = meso-2,6-diaminopimelate. The protein operates within amino-acid biosynthesis; L-lysine biosynthesis via DAP pathway; DL-2,6-diaminopimelate from LL-2,6-diaminopimelate: step 1/1. In terms of biological role, catalyzes the stereoinversion of LL-2,6-diaminopimelate (L,L-DAP) to meso-diaminopimelate (meso-DAP), a precursor of L-lysine and an essential component of the bacterial peptidoglycan. The chain is Diaminopimelate epimerase from Prochlorococcus marinus (strain MIT 9313).